The primary structure comprises 263 residues: tRNA (guanine-N(1)-)-methyltransferase (263 aa).

S-adenosyl-L-methionine-binding positions include G113 and 137–142 (LGDYVL).

Belongs to the RNA methyltransferase TrmD family. As to quaternary structure, homodimer.

The protein localises to the cytoplasm. It carries out the reaction guanosine(37) in tRNA + S-adenosyl-L-methionine = N(1)-methylguanosine(37) in tRNA + S-adenosyl-L-homocysteine + H(+). Functionally, specifically methylates guanosine-37 in various tRNAs. The sequence is that of tRNA (guanine-N(1)-)-methyltransferase from Renibacterium salmoninarum (strain ATCC 33209 / DSM 20767 / JCM 11484 / NBRC 15589 / NCIMB 2235).